Consider the following 151-residue polypeptide: SsrA-binding protein (151 aa).

Belongs to the SmpB family.

It localises to the cytoplasm. Required for rescue of stalled ribosomes mediated by trans-translation. Binds to transfer-messenger RNA (tmRNA), required for stable association of tmRNA with ribosomes. tmRNA and SmpB together mimic tRNA shape, replacing the anticodon stem-loop with SmpB. tmRNA is encoded by the ssrA gene; the 2 termini fold to resemble tRNA(Ala) and it encodes a 'tag peptide', a short internal open reading frame. During trans-translation Ala-aminoacylated tmRNA acts like a tRNA, entering the A-site of stalled ribosomes, displacing the stalled mRNA. The ribosome then switches to translate the ORF on the tmRNA; the nascent peptide is terminated with the 'tag peptide' encoded by the tmRNA and targeted for degradation. The ribosome is freed to recommence translation, which seems to be the essential function of trans-translation. The polypeptide is SsrA-binding protein (Chlamydia pneumoniae (Chlamydophila pneumoniae)).